We begin with the raw amino-acid sequence, 102 residues long: Small ribosomal subunit protein uS10 (102 aa).

The protein belongs to the universal ribosomal protein uS10 family. As to quaternary structure, part of the 30S ribosomal subunit.

Functionally, involved in the binding of tRNA to the ribosomes. This chain is Small ribosomal subunit protein uS10, found in Bartonella henselae (strain ATCC 49882 / DSM 28221 / CCUG 30454 / Houston 1) (Rochalimaea henselae).